Reading from the N-terminus, the 335-residue chain is Large ribosomal subunit protein uL3 (335 aa).

The disordered stretch occupies residues 1 to 20 (MATIHRPRRGSLAFSPRKRA).

It belongs to the universal ribosomal protein uL3 family. In terms of assembly, part of the 50S ribosomal subunit. Forms a cluster with proteins L14 and L24e.

One of the primary rRNA binding proteins, it binds directly near the 3'-end of the 23S rRNA, where it nucleates assembly of the 50S subunit. This is Large ribosomal subunit protein uL3 (rpl3) from Methanothrix harundinacea (strain 6Ac) (Methanosaeta harundinacea).